Consider the following 336-residue polypeptide: Telomere-binding protein cav (336 aa).

The required for binding to Su(var)205 stretch occupies residues 107–328 (RKKMVQPYPE…TITFQNSESE (222 aa)). Disordered regions lie at residues 137–158 (RLDRWQRKKTQNLSAQESSPAR) and 199–218 (SSDLSGIGDDEDEHQQSEFQ). 2 short sequence motifs (su(var)205-binding Pro-containing repeat) span residues 225-231 (PETAINE) and 289-295 (PETEMNE). A compositionally biased stretch (polar residues) spans 308 to 327 (MSIGPSIDSEGTITFQNSES). A disordered region spans residues 308–336 (MSIGPSIDSEGTITFQNSESEPIDVDSIA).

Interacts (via C-terminus) with Su(var)205 dimer (via hinge and chromoshadow domain) and with moi to form the terminin, telomere-capping, complex. Interacts with HP6, which is also part of the terminin complex.

It localises to the nucleus. Its subcellular location is the chromosome. The protein localises to the telomere. Binds to chromosome ends in a sequence-dependent manner and is required for telomere capping. This Drosophila sechellia (Fruit fly) protein is Telomere-binding protein cav.